The chain runs to 512 residues: Glucagon-like peptide 2 receptor (512 aa).

The Extracellular portion of the chain corresponds to 1 to 135 (MRRLWGPGTP…KQNVDHYHHT (135 aa)). 3 cysteine pairs are disulfide-bonded: Cys43–Cys65, Cys56–Cys97, and Cys78–Cys119. A glycan (N-linked (GlcNAc...) asparagine) is linked at Asn73. The chain crosses the membrane as a helical span at residues 136-160 (LLSTLQLMYTVGYSLSLISLFLALT). At 161–172 (LFLFLRKLHCTR) the chain is on the cytoplasmic side. The chain crosses the membrane as a helical span at residues 173–197 (NYIHMNLFASFILRALVVLVKDMVF). At 198–223 (YNSYSRRPDSESGWMSYLSEISASCR) the chain is on the extracellular side. The helical transmembrane segment at 224–247 (SVQVLLHYFVGTNHLWLLVEGLYL) threads the bilayer. The Cytoplasmic portion of the chain corresponds to 248–261 (HALLEPTVLPERRL). Residues 262–283 (WPKYLVVGWAFPMLFVIPWIFV) form a helical membrane-spanning segment. Over 284–301 (RASLENTGCWAVNENKKI) the chain is Extracellular. A helical transmembrane segment spans residues 302–324 (WWIIRGPILLCVTVNFFIFLKIL). The Cytoplasmic portion of the chain corresponds to 325 to 348 (KLLISKFRAHQMCFRDYKYRLAKS). Residues 349-367 (TLLLILLMGVHEFLFTFFT) traverse the membrane as a helical segment. The Extracellular portion of the chain corresponds to 368–379 (DDQVQGFSRLIR). Residues 380 to 400 (LFIQLTLSSFHGFLVALQYGF) traverse the membrane as a helical segment. The Cytoplasmic portion of the chain corresponds to 401 to 512 (ASREVKAELR…MEEILEESEI (112 aa)). The interval 458–494 (SGVSSHLTAGNLRDHGAQPHRGRGAWPRASSLSESSE) is disordered.

It belongs to the G-protein coupled receptor 2 family.

The protein localises to the cell membrane. Functionally, this is a receptor for glucagon-like peptide 2. The activity of this receptor is mediated by G proteins which activate adenylyl cyclase. The chain is Glucagon-like peptide 2 receptor (Glp2r) from Mus musculus (Mouse).